A 452-amino-acid polypeptide reads, in one-letter code: MKLKYFGTDGVRGVANRDLSPELAFRVGRAGGYVLTRHSQRKRPQVLVSRDTRISGEMLENALVAGLLSVGIEVFRLGVVTTPGVAYLVRAQEADAGVMITASHNPIQYNGIKYFGGDGFKLSDELEYEIEQLLDAEEDILPRPSDDGLGTVEDYREGALKYTSFLEQTISTDLDGLKVVIDGANGATSSFIANLFADVNADFIPLHVSPNGLNTNLNCGSTHPADLQKAVVENQADLGIAFDGDGDRCIAVDNEGNLVDGDKIMYICGKSMEANGRLKKDTVVTTVMSNLGMYKALESHGMKSVKTKVGDRYVVEEMLKNGYNLGGEQSGHIIFLDHNTTGDGMLTALQLLQVVKTSGKSLKELAADVVTYPQELVNITVEDKEAALNNQELKNAIAKVEEKMAGDGRILVRPSGTEPLLRIMAEAPTKELVHAYVSQIADVARQVLPGAK.

Ser-103 functions as the Phosphoserine intermediate in the catalytic mechanism. Residues Ser-103, Asp-243, Asp-245, and Asp-247 each contribute to the Mg(2+) site. A Phosphoserine modification is found at Ser-103.

This sequence belongs to the phosphohexose mutase family. Mg(2+) is required as a cofactor. Post-translationally, activated by phosphorylation.

The enzyme catalyses alpha-D-glucosamine 1-phosphate = D-glucosamine 6-phosphate. In terms of biological role, catalyzes the conversion of glucosamine-6-phosphate to glucosamine-1-phosphate. The chain is Phosphoglucosamine mutase from Limosilactobacillus fermentum (strain NBRC 3956 / LMG 18251) (Lactobacillus fermentum).